The following is a 346-amino-acid chain: Phosphoribosylformylglycinamidine cyclo-ligase (346 aa).

The protein belongs to the AIR synthase family.

It localises to the cytoplasm. It catalyses the reaction 2-formamido-N(1)-(5-O-phospho-beta-D-ribosyl)acetamidine + ATP = 5-amino-1-(5-phospho-beta-D-ribosyl)imidazole + ADP + phosphate + H(+). It functions in the pathway purine metabolism; IMP biosynthesis via de novo pathway; 5-amino-1-(5-phospho-D-ribosyl)imidazole from N(2)-formyl-N(1)-(5-phospho-D-ribosyl)glycinamide: step 2/2. The protein is Phosphoribosylformylglycinamidine cyclo-ligase of Bacillus anthracis (strain A0248).